The sequence spans 331 residues: 6-phosphogluconolactonase (331 aa).

The protein belongs to the cycloisomerase 2 family.

The enzyme catalyses 6-phospho-D-glucono-1,5-lactone + H2O = 6-phospho-D-gluconate + H(+). The protein operates within carbohydrate degradation; pentose phosphate pathway; D-ribulose 5-phosphate from D-glucose 6-phosphate (oxidative stage): step 2/3. Functionally, catalyzes the hydrolysis of 6-phosphogluconolactone to 6-phosphogluconate. The sequence is that of 6-phosphogluconolactonase from Salmonella typhi.